A 317-amino-acid polypeptide reads, in one-letter code: F-box protein FBW2 (317 aa).

The region spanning 7-54 is the F-box domain; sequence FRHWDELIPDALGLIFSHLPLQEVLTVVPRVCKAWNRAVTGPYCWQEI.

As to quaternary structure, part of a SCF (SKP1-cullin-F-box) protein ligase complex. Interacts with CUL1, CUL2 and SPK1B/ASK2.

The protein resides in the nucleus. The protein operates within protein modification; protein ubiquitination. Component of SCF(ASK-cullin-F-box) E3 ubiquitin ligase complexes, which may mediate the ubiquitination and subsequent proteasomal degradation of target proteins. In Arabidopsis thaliana (Mouse-ear cress), this protein is F-box protein FBW2 (FBW2).